Consider the following 256-residue polypeptide: Protein Ta0487 (256 aa).

The protein belongs to the CinA family.

In Thermoplasma acidophilum (strain ATCC 25905 / DSM 1728 / JCM 9062 / NBRC 15155 / AMRC-C165), this protein is Protein Ta0487.